A 434-amino-acid polypeptide reads, in one-letter code: UDP-N-acetylmuramoylalanine--D-glutamate ligase (434 aa).

Position 117–123 (117–123 (GTNGKST)) interacts with ATP.

The protein belongs to the MurCDEF family.

Its subcellular location is the cytoplasm. The enzyme catalyses UDP-N-acetyl-alpha-D-muramoyl-L-alanine + D-glutamate + ATP = UDP-N-acetyl-alpha-D-muramoyl-L-alanyl-D-glutamate + ADP + phosphate + H(+). It participates in cell wall biogenesis; peptidoglycan biosynthesis. Cell wall formation. Catalyzes the addition of glutamate to the nucleotide precursor UDP-N-acetylmuramoyl-L-alanine (UMA). The sequence is that of UDP-N-acetylmuramoylalanine--D-glutamate ligase from Sphingopyxis alaskensis (strain DSM 13593 / LMG 18877 / RB2256) (Sphingomonas alaskensis).